A 245-amino-acid polypeptide reads, in one-letter code: Pyridoxine 5'-phosphate synthase (245 aa).

Asparagine 9 lines the 3-amino-2-oxopropyl phosphate pocket. 11 to 12 (DH) serves as a coordination point for 1-deoxy-D-xylulose 5-phosphate. Arginine 20 contributes to the 3-amino-2-oxopropyl phosphate binding site. Residue histidine 45 is the Proton acceptor of the active site. Arginine 47 and histidine 52 together coordinate 1-deoxy-D-xylulose 5-phosphate. The Proton acceptor role is filled by glutamate 72. Threonine 102 contributes to the 1-deoxy-D-xylulose 5-phosphate binding site. Histidine 193 (proton donor) is an active-site residue. 3-amino-2-oxopropyl phosphate contacts are provided by residues glycine 194 and 215–216 (GH).

Belongs to the PNP synthase family. In terms of assembly, homooctamer; tetramer of dimers.

It is found in the cytoplasm. It catalyses the reaction 3-amino-2-oxopropyl phosphate + 1-deoxy-D-xylulose 5-phosphate = pyridoxine 5'-phosphate + phosphate + 2 H2O + H(+). Its pathway is cofactor biosynthesis; pyridoxine 5'-phosphate biosynthesis; pyridoxine 5'-phosphate from D-erythrose 4-phosphate: step 5/5. Catalyzes the complicated ring closure reaction between the two acyclic compounds 1-deoxy-D-xylulose-5-phosphate (DXP) and 3-amino-2-oxopropyl phosphate (1-amino-acetone-3-phosphate or AAP) to form pyridoxine 5'-phosphate (PNP) and inorganic phosphate. The polypeptide is Pyridoxine 5'-phosphate synthase (Shewanella oneidensis (strain ATCC 700550 / JCM 31522 / CIP 106686 / LMG 19005 / NCIMB 14063 / MR-1)).